The following is a 208-amino-acid chain: MGISRDNWHKRRKTGGKRKPYHKKRKYELGRPAANTKIGPRRIHTVGVRGGNKKYRALRLDVGNFSWGSECCTRKTRIIDVVYNASNNELVRTKTLVKNCIVLIDSTPYRQWYESHYALPLGRKKGAKLTPEEEEILNKKRSKKIQKKYDERKKNAKISSLLEEQFQQGKLLACIASRPGQCGRADGYVLEGKELEFYLRKIKARKGK.

The segment at 1-27 is disordered; it reads MGISRDNWHKRRKTGGKRKPYHKKRKY. Residue Gly2 is the site of N-myristoyl glycine attachment. Positions 8 to 26 are enriched in basic residues; the sequence is WHKRRKTGGKRKPYHKKRK. Residues Lys37 and Lys128 each carry the N6-acetyllysine modification. Thr130 is subject to Phosphothreonine. Ser160 is modified (phosphoserine). Residues Lys170 and Lys193 each participate in a glycyl lysine isopeptide (Lys-Gly) (interchain with G-Cter in SUMO2) cross-link.

The protein belongs to the eukaryotic ribosomal protein eS8 family. Component of the small ribosomal subunit. Identified in a IGF2BP1-dependent mRNP granule complex containing untranslated mRNAs. Part of the small subunit (SSU) processome, composed of more than 70 proteins and the RNA chaperone small nucleolar RNA (snoRNA) U3.

It is found in the cytoplasm. Its subcellular location is the membrane. The protein resides in the nucleus. It localises to the nucleolus. Its function is as follows. Component of the small ribosomal subunit. The ribosome is a large ribonucleoprotein complex responsible for the synthesis of proteins in the cell. Part of the small subunit (SSU) processome, first precursor of the small eukaryotic ribosomal subunit. During the assembly of the SSU processome in the nucleolus, many ribosome biogenesis factors, an RNA chaperone and ribosomal proteins associate with the nascent pre-rRNA and work in concert to generate RNA folding, modifications, rearrangements and cleavage as well as targeted degradation of pre-ribosomal RNA by the RNA exosome. The polypeptide is Small ribosomal subunit protein eS8 (RPS8) (Oryctolagus cuniculus (Rabbit)).